The chain runs to 421 residues: D-aspartate ligase (421 aa).

An ATP-grasp domain is found at 130–332 (YEVCEEYDLP…LARFVTEDRV (203 aa)). An ATP-binding site is contributed by 161 to 224 (PFEFPVALKP…QDFIPGDDSN (64 aa)). Mg(2+) contacts are provided by Asp290, Glu304, and Asn306.

Mg(2+) serves as cofactor.

It carries out the reaction [beta-GlcNAc-(1-&gt;4)-Mur2Ac(oyl-L-Ala-gamma-D-Glu-L-Lys-D-Ala-D-Ala)](n) + n D-aspartate + n ATP = [beta-GlcNAc-(1-&gt;4)-Mur2Ac(oyl-L-Ala-gamma-D-Glu-6-N-(beta-D-Asp)-L-Lys-D-Ala-D-Ala)]n + n ADP + n phosphate + n H(+). Its pathway is cell wall biogenesis; peptidoglycan biosynthesis. Catalyzes the addition of D-aspartate onto the lysine residue in the peptidoglycan precursor UDP-MurNAc-pentapeptide. The ligation occurs between the beta-carboxylate of D-Asp and the epsilon-amino group of L-Lys. Is highly specific for D-aspartate, as L-aspartate, D-glutamate, D-alanine, D-iso-asparagine and D-malate are not substrates. This Enterococcus faecium (strain Aus0004) protein is D-aspartate ligase.